The primary structure comprises 90 residues: uncharacterized protein (90 aa).

The signal sequence occupies residues 1–20 (MEKLFVLVFALALLAFSSDA).

The protein localises to the secreted. This is an uncharacterized protein from Mus musculus (Mouse).